The following is an 884-amino-acid chain: Exocyst complex component 2 (884 aa).

Residues 1–11 (MEENAQARERL) show a composition bias toward basic and acidic residues. The interval 1–27 (MEENAQARERLPPTVTGLSPTEGVPGT) is disordered. The 86-residue stretch at 13 to 98 (PTVTGLSPTE…GSSNVKFRVF (86 aa)) folds into the IPT/TIG domain. 2 coiled-coil regions span residues 178-206 (ADAT…SEEM) and 846-874 (NQRL…AENL).

The protein belongs to the SEC5 family. In terms of assembly, the exocyst complex is composed of sec-3/exoc1, sec-5/exoc2, sec-6/exoc3, sec-8/exoc4, sec-10/exoc5, sec-15/exoc6, exo-70/exoc7 and exo-84/exoc8.

Its function is as follows. Component of the exocyst complex involved in the docking of exocytic vesicles with fusion sites on the plasma membrane. The protein is Exocyst complex component 2 (sec-5) of Caenorhabditis elegans.